The sequence spans 312 residues: Phospholipid phosphatase 3 (312 aa).

The Cytoplasmic portion of the chain corresponds to 1-33 (MQSYKYDKAIVPESKNGGSPALNNNPRKGGSKR). Phosphoserine is present on serine 19. The helical transmembrane segment at 34 to 54 (VLLICLDLFCLFMAALPFLII) threads the bilayer. The Extracellular segment spans residues 55–85 (ETSTIKPYRRGFYCNDESIKYPLKVSETIND). A helical transmembrane segment spans residues 86 to 106 (AVLCAVGIVIAILAIITGEFY). Residues 107–123 (RIYYLKEKSRSTTQNPY) are Cytoplasmic-facing. Residues 109-110 (YY) carry the Dityrosine basolateral targeting motif motif. Residues 124-144 (VAALYKQVGCFLFGCAISQSF) form a helical membrane-spanning segment. Residues 145–194 (TDIAKVSIGRLRPHFLSVCDPDFSQINCSEGYIQNYRCRGEDSKVQEARK) are Extracellular-facing. Positions 149-157 (KVSIGRLRP) are phosphatase sequence motif I. Residue asparagine 171 is glycosylated (N-linked (GlcNAc...) asparagine). The Integrin-binding motif signature appears at 183–185 (RGE). A helical transmembrane segment spans residues 195 to 215 (SFFSGHASFSMFTMLYLVLYL). The segment at 197-200 (FSGH) is phosphatase sequence motif II. The active-site Proton donors is histidine 200. Residues 216 to 226 (QARFTWRGARL) lie on the Cytoplasmic side of the membrane. The helical transmembrane segment at 227 to 244 (LRPLLQFTLLMMAFYTGL) threads the bilayer. The phosphatase sequence motif III stretch occupies residues 245–256 (SRVSDYKHHPSD). Residues 245–258 (SRVSDYKHHPSDVL) lie on the Extracellular side of the membrane. Histidine 252 acts as the Nucleophile in catalysis. A helical transmembrane segment spans residues 259–279 (AGFAQGALVACCIVFFVSDLF). A mediates interaction with CTNND1 region spans residues 276 to 312 (SDLFKTKTSLSLPAPAIRREILSPVDIIDRNNHHNMV). Residues 280 to 312 (KTKTSLSLPAPAIRREILSPVDIIDRNNHHNMV) lie on the Cytoplasmic side of the membrane.

The protein belongs to the PA-phosphatase related phosphoesterase family. As to quaternary structure, forms functional homodimers and homooligomers that are not required for substrate recognition and catalytic activity. Can also form heterooligomers with other PLPP2 and PLPP3. Interacts with CTNND1; negatively regulates the PLPP3-mediated stabilization of beta-catenin/CTNNB1. Post-translationally, N-glycosylated. Contains high-mannose oligosaccharides. As to expression, detected in lung, cerebellum and heart atrium.

Its subcellular location is the cell membrane. It localises to the basolateral cell membrane. It is found in the endoplasmic reticulum membrane. The protein resides in the endoplasmic reticulum-Golgi intermediate compartment membrane. The protein localises to the golgi apparatus membrane. Its subcellular location is the golgi apparatus. It localises to the trans-Golgi network membrane. It is found in the membrane raft. The enzyme catalyses a 1,2-diacyl-sn-glycero-3-phosphate + H2O = a 1,2-diacyl-sn-glycerol + phosphate. The catalysed reaction is 1,2-dihexadecanoyl-sn-glycero-3-phosphate + H2O = 1,2-dihexadecanoyl-sn-glycerol + phosphate. It catalyses the reaction 1,2-di-(9Z-octadecenoyl)-sn-glycero-3-phosphate + H2O = 1,2-di-(9Z-octadecenoyl)-sn-glycerol + phosphate. It carries out the reaction a monoacyl-sn-glycero-3-phosphate + H2O = a monoacylglycerol + phosphate. The enzyme catalyses (9Z)-octadecenoyl-sn-glycero-3-phosphate + H2O = (9Z-octadecenoyl)-glycerol + phosphate. The catalysed reaction is sphing-4-enine 1-phosphate + H2O = sphing-4-enine + phosphate. It catalyses the reaction an N-acylsphing-4-enine 1-phosphate + H2O = an N-acylsphing-4-enine + phosphate. It carries out the reaction N-(octanoyl)-sphing-4-enine-1-phosphate + H2O = N-octanoylsphing-4-enine + phosphate. The enzyme catalyses N-(9Z-octadecenoyl)-ethanolamine phosphate + H2O = N-(9Z-octadecenoyl) ethanolamine + phosphate. It participates in lipid metabolism; phospholipid metabolism. With respect to regulation, magnesium-independent phospholipid phosphatase. Insensitive to N-ethylmaleimide. Its function is as follows. Magnesium-independent phospholipid phosphatase of the plasma membrane that catalyzes the dephosphorylation of a variety of glycerolipid and sphingolipid phosphate esters including phosphatidate/PA, lysophosphatidate/LPA, diacylglycerol pyrophosphate/DGPP, sphingosine 1-phosphate/S1P and ceramide 1-phosphate/C1P. Also acts on N-oleoyl ethanolamine phosphate/N-(9Z-octadecenoyl)-ethanolamine phosphate, a potential physiological compound. Has both an extracellular and an intracellular phosphatase activity, allowing the hydrolysis and the cellular uptake of these bioactive lipid mediators from the milieu, regulating signal transduction in different cellular processes. Through the dephosphorylation of extracellular sphingosine-1-phosphate and the regulation of its extra- and intracellular availability, plays a role in vascular homeostasis, regulating endothelial cell migration, adhesion, survival, proliferation and the production of pro-inflammatory cytokines. By maintaining the appropriate levels of this lipid in the cerebellum, also ensure its proper development and function. Through its intracellular lipid phosphatase activity may act in early compartments of the secretory pathway, regulating the formation of Golgi to endoplasmic reticulum retrograde transport carriers. In terms of biological role, independently of this phosphatase activity may also function in the Wnt signaling pathway and the stabilization of beta-catenin/CTNNB1, thereby regulating cell proliferation, migration and differentiation in angiogenesis or yet in tumor growth. Also plays a role in integrin-mediated cell-cell adhesion in angiogenesis. In Mus musculus (Mouse), this protein is Phospholipid phosphatase 3.